The following is a 252-amino-acid chain: Small ribosomal subunit protein uS2B (252 aa).

At Ser-2 the chain carries N-acetylserine. 2 stretches are compositionally biased toward acidic residues: residues 213-229 (VAEE…EEVK) and 241-252 (EWAEENADNVEW). The disordered stretch occupies residues 213 to 252 (VAEEAAAAEEGEEEEVKEEVTEGQAEATEWAEENADNVEW).

It belongs to the universal ribosomal protein uS2 family. In terms of assembly, component of the small ribosomal subunit. Mature ribosomes consist of a small (40S) and a large (60S) subunit. The 40S subunit contains about 33 different proteins and 1 molecule of RNA (18S). The 60S subunit contains about 49 different proteins and 3 molecules of RNA (25S, 5.8S and 5S). Interacts with RPS21.

Its subcellular location is the cytoplasm. Required for the assembly and/or stability of the 40S ribosomal subunit. Required for the processing of the 20S rRNA-precursor to mature 18S rRNA in a late step of the maturation of 40S ribosomal subunits. The sequence is that of Small ribosomal subunit protein uS2B from Saccharomyces cerevisiae (strain RM11-1a) (Baker's yeast).